Here is a 364-residue protein sequence, read N- to C-terminus: Peptide chain release factor 2 (364 aa).

Position 251 is an N5-methylglutamine (Q251).

The protein belongs to the prokaryotic/mitochondrial release factor family. In terms of processing, methylated by PrmC. Methylation increases the termination efficiency of RF2.

It is found in the cytoplasm. Peptide chain release factor 2 directs the termination of translation in response to the peptide chain termination codons UGA and UAA. The polypeptide is Peptide chain release factor 2 (prfB) (Buchnera aphidicola subsp. Schizaphis graminum (strain Sg)).